The chain runs to 455 residues: Mitochondrial inner membrane magnesium transporter LPE10 (455 aa).

The N-terminal 56 residues, 1–56 (MHIKISTDFAIQNLHCTTMIRPLLRLCGQRTAATPFVSFFRPPKKPLSGISFARHY), are a transit peptide targeting the mitochondrion. 2 helical membrane-spanning segments follow: residues 365 to 385 (FQIG…YGMN) and 396 to 416 (GFLG…AHFL). Positions 382–385 (YGMN) match the YGMN motif. The span at 433–444 (KAMKKKDTVAEK) shows a compositional bias: basic and acidic residues. The disordered stretch occupies residues 433–455 (KAMKKKDTVAEKRRNHLRNWLTK).

This sequence belongs to the CorA metal ion transporter (MIT) (TC 1.A.35) family. Forms homooligomers. Interacts with MRS2.

It is found in the mitochondrion inner membrane. In terms of biological role, mitochondrial inner membrane magnesium transporter required for mitochondrial magnesium homeostasis. Modulates the conductance of the MRS2 channel. Involved in the splicing of mRNA group II introns in mitochondria by affecting mitochondrial magnesium concentrations, which are critical for group II intron splicing. The sequence is that of Mitochondrial inner membrane magnesium transporter LPE10 (LPE10) from Yarrowia lipolytica (strain CLIB 122 / E 150) (Yeast).